Reading from the N-terminus, the 161-residue chain is Nucleotide-binding protein Mmc1_1670 (161 aa).

This sequence belongs to the YajQ family.

In terms of biological role, nucleotide-binding protein. The sequence is that of Nucleotide-binding protein Mmc1_1670 from Magnetococcus marinus (strain ATCC BAA-1437 / JCM 17883 / MC-1).